Consider the following 550-residue polypeptide: Calcium-dependent protein kinase 20 (550 aa).

The interval 1-58 (MGNCCVTPEGSGRGRKKQQQEQKQKQKEPKQQQQQQKKGKKPNPFSIEYNRSSAPSGH) is disordered. A lipid anchor (N-myristoyl glycine) is attached at Gly-2. Basic and acidic residues predominate over residues 18–30 (QQQEQKQKQKEPK). The Protein kinase domain maps to 75 to 333 (YELGGELGRG…AQQVLDHPWL (259 aa)). Residues 81–89 (LGRGEFGVT) and Lys-104 contribute to the ATP site. Asp-199 serves as the catalytic Proton acceptor. Residues 339–369 (APNVNLGETVKARLQQFSVMNKFKKHALRVI) form an autoinhibitory domain region. 4 EF-hand domains span residues 376-411 (EEVA…LGHQ), 412-447 (MADA…LRKI), 448-483 (GNDE…DLGA), and 484-519 (NHEE…GTDW). Asp-389, Asn-391, Asp-393, Met-395, Glu-400, Asp-425, Asp-427, Asn-429, Ser-431, Glu-436, Asp-461, Asn-463, Ser-465, Tyr-467, Glu-472, Asp-497, Asp-499, Asp-501, Lys-503, and Glu-508 together coordinate Ca(2+).

The protein belongs to the protein kinase superfamily. Ser/Thr protein kinase family. CDPK subfamily. Expressed in roots and leaf blades.

The protein localises to the membrane. The catalysed reaction is L-seryl-[protein] + ATP = O-phospho-L-seryl-[protein] + ADP + H(+). The enzyme catalyses L-threonyl-[protein] + ATP = O-phospho-L-threonyl-[protein] + ADP + H(+). Its activity is regulated as follows. Activated by calcium. Autophosphorylation may play an important role in the regulation of the kinase activity. In terms of biological role, may play a role in signal transduction pathways that involve calcium as a second messenger. The sequence is that of Calcium-dependent protein kinase 20 from Oryza sativa subsp. japonica (Rice).